The primary structure comprises 708 residues: Exocyst complex component 5 (708 aa).

Ala-2 is subject to N-acetylalanine. Residues 40–101 (KRLLEEFVNH…AFQHFQELDE (62 aa)) are a coiled coil. Thr-122, Thr-395, and Thr-405 each carry phosphothreonine. Ser-412 carries the post-translational modification Phosphoserine.

The protein belongs to the SEC10 family. The exocyst complex is composed of EXOC1, EXOC2, EXOC3, EXOC4, EXOC5, EXOC6, EXOC7 and EXOC8. Interacts with EXOC3L1.

It localises to the cytoplasm. The protein resides in the midbody. Functionally, component of the exocyst complex involved in the docking of exocytic vesicles with fusion sites on the plasma membrane. This Mus musculus (Mouse) protein is Exocyst complex component 5 (Exoc5).